A 1025-amino-acid polypeptide reads, in one-letter code: METFTNDRLQLPRNMIENSMFEEEPDVVDLAKEPCLHPLEPDEVEYEPRGSRLLVRGLGEHEMDEDEEDYESSAKLLGMSFMNRSSGLRNSATGYRQSPDGTCSVPSARTLVICVFVIVVAVSVIMVIYLLPRCTFTKEGCHKTNQSAELIQPIATNGKVFPWAQIRLPTAIIPQRYELSLHPNLTSMTFRGSVTISLQALQDTRDIILHSTGHNISSVTFMSAVSSQEKQVEILEYPYHEQIAVVAPESLLTGHNYTLKIEYSANISNSYYGFYGITYTDKSNEKKNFAATQFEPLAARSAFPCFDEPAFKATFIIKITRDEHHTALSNMPKKSSVPTEEGLIQDEFSESVKMSTYLVAFIVGEMRNLSQDVNGTLVSVYAVPEKIDQVYHALDTTVKLLEFYQNYFEIQYPLKKLDLVAIPDFEAGAMENWGLLTFREETLLYDNATSSVADRKLVTKIIAHELAHQWFGNLVTMQWWNDLWLNEGFATFMEYFSVEKIFKELNSYEDFLDARFKTMRKDSLNSSHPISSSVQSSEQIEEMFDSLSYFKGASLLLMLKSYLSEDVFQHAIILYLHNHSYAAIQSDDLWDSFNEVTGKTLDVKKMMKTWTLQKGFPLVTVQRKGTELLLQQERFFPSMQPEIQDSDTSHLWHIPISYVTDGRNYSEYRSVSLLDKKSDVINLTEQVQWVKVNTNMTGYYIVHYAHDGWAALINQLKRNPYVLSDKDRANLINNIFELAGLGKVPLQMAFDLIDYLRNETHTAPITEALFQTDLIYNLLEKLGHMDLSSRLVTRVHKLLQNQIQQQTWTDEGTPSMRELRSALLEFACAHSLENCTTMATKLFDGWMASNGTQSLPTDVMTTVFKVGARTEKGWLFLFSMYSSMGSEAEKDKILEALASSADAHKLYWLMKSSLDGDIIRTQKLSLIIRTVGRQFPGHLLAWDFVKENWNKLVHKFHLGSYTIQSIVAGSTHLFSTKTHLSEVQEFFENQSEATLQLRCVQEAFEVIELNIQWMARNLKTLTLWL.

Position 1 is an N-acetylmethionine (Met1). Residues 1 to 109 (METFTNDRLQ…DGTCSVPSAR (109 aa)) are Cytoplasmic-facing. A Dileucine internalization motif motif is present at residues 53–54 (LL). The residue at position 70 (Tyr70) is a Phosphotyrosine. The short motif at 76–77 (LL) is the Dileucine internalization motif element. A phosphoserine; by PKC/PRKCZ; in vitro mark is found at Ser80 and Ser91. The segment at 96 to 101 (RQSPDG) is tankyrase binding. Residues 110 to 131 (TLVICVFVIVVAVSVIMVIYLL) traverse the membrane as a helical; Signal-anchor for type II membrane protein segment. The Extracellular portion of the chain corresponds to 132 to 1025 (PRCTFTKEGC…RNLKTLTLWL (894 aa)). 5 N-linked (GlcNAc...) asparagine glycosylation sites follow: Asn145, Asn184, Asn215, Asn256, and Asn266. Glu295 contributes to the substrate binding site. Asn368 and Asn374 each carry an N-linked (GlcNAc...) asparagine glycan. Residue 428–432 (GAMEN) coordinates substrate. Asn447 carries N-linked (GlcNAc...) asparagine glycosylation. His464 is a binding site for Zn(2+). Residue Glu465 is the Proton acceptor of the active site. The Zn(2+) site is built by His468 and Glu487. N-linked (GlcNAc...) asparagine glycans are attached at residues Asn525, Asn578, Asn664, Asn682, Asn695, Asn758, Asn834, Asn850, and Asn989.

The protein belongs to the peptidase M1 family. In terms of assembly, homodimer. Binds tankyrases 1 and 2. Zn(2+) is required as a cofactor. N-glycosylated. In terms of tissue distribution, highly expressed in heart, brain, spleen, lung, kidney and white adipose tissue. Detected at lower levels in skeletal muscle and liver.

It localises to the cell membrane. It is found in the endomembrane system. It carries out the reaction Release of an N-terminal amino acid, Cys-|-Xaa-, in which the half-cystine residue is involved in a disulfide loop, notably in oxytocin or vasopressin. Hydrolysis rates on a range of aminoacyl arylamides exceed that for the cystinyl derivative, however.. In terms of biological role, release of an N-terminal amino acid, cleave before cysteine, leucine as well as other amino acids. Degrades peptide hormones such as oxytocin, vasopressin and angiotensin III, and plays a role in maintaining homeostasis during pregnancy. May be involved in the inactivation of neuronal peptides in the brain. Cleaves Met-enkephalin and dynorphin. Binds angiotensin IV and may be the angiotensin IV receptor in the brain. The chain is Leucyl-cystinyl aminopeptidase (Lnpep) from Rattus norvegicus (Rat).